Consider the following 164-residue polypeptide: UPF0114 protein YqhA (164 aa).

3 helical membrane passes run 15–35, 53–73, and 136–156; these read LLAPVYFGLSLALIALALKFF, LILVLLSLVDMTLVGGLLVMV, and LMWYVIIHLTFVLSAFVMGYL.

The protein belongs to the UPF0114 family.

The protein localises to the cell membrane. This is UPF0114 protein YqhA from Escherichia coli O6:H1 (strain CFT073 / ATCC 700928 / UPEC).